The chain runs to 375 residues: Chaperone protein DnaJ (375 aa).

One can recognise a J domain in the interval 6-71; sequence DYYEILGVSR…DKRARYDQYG (66 aa). The segment at 132–214 adopts a CR-type zinc-finger fold; sequence GTTKKITIPR…CQGSGKVRKQ (83 aa). Residues Cys-145, Cys-148, Cys-162, Cys-165, Cys-188, Cys-191, Cys-202, and Cys-205 each coordinate Zn(2+). CXXCXGXG motif repeat units follow at residues 145–152, 162–169, 188–195, and 202–209; these read CDTCNGTG, CPQCNGSG, CDRCGGRG, and CPTCQGSG. The segment at 222–243 is disordered; sequence PPGVDTGTRLRMPNEGEAGDKG.

Belongs to the DnaJ family. As to quaternary structure, homodimer. Zn(2+) is required as a cofactor.

The protein resides in the cytoplasm. Its function is as follows. Participates actively in the response to hyperosmotic and heat shock by preventing the aggregation of stress-denatured proteins and by disaggregating proteins, also in an autonomous, DnaK-independent fashion. Unfolded proteins bind initially to DnaJ; upon interaction with the DnaJ-bound protein, DnaK hydrolyzes its bound ATP, resulting in the formation of a stable complex. GrpE releases ADP from DnaK; ATP binding to DnaK triggers the release of the substrate protein, thus completing the reaction cycle. Several rounds of ATP-dependent interactions between DnaJ, DnaK and GrpE are required for fully efficient folding. Also involved, together with DnaK and GrpE, in the DNA replication of plasmids through activation of initiation proteins. The protein is Chaperone protein DnaJ of Halothermothrix orenii (strain H 168 / OCM 544 / DSM 9562).